A 1583-amino-acid chain; its full sequence is Transcriptional activator GLI3 (1583 aa).

Met-1 carries the N-acetylmethionine modification. Polar residues-rich tracts occupy residues 1-10 (MEAQAHSSTA) and 58-78 (ITMQPQSVQGLNKISEEPSTS). Positions 1-78 (MEAQAHSSTA…NKISEEPSTS (78 aa)) are disordered. Arg-175 carries the post-translational modification Omega-N-methylarginine. Residues 368-475 (QSLGSAFGHS…DKDESKQEPE (108 aa)) are disordered. Low complexity predominate over residues 403–421 (VQVSSGPSESSQSKPTSES). A Glycyl lysine isopeptide (Lys-Gly) (interchain with G-Cter in SUMO2) cross-link involves residue Lys-438. Residues 448–457 (SRGQQEQPEG) show a composition bias toward polar residues. Over residues 461–474 (VKEEADKDESKQEP) the composition is skewed to basic and acidic residues. Lys-462 participates in a covalent cross-link: Glycyl lysine isopeptide (Lys-Gly) (interchain with G-Cter in SUMO2). 5 C2H2-type zinc fingers span residues 480-505 (TNCHWEGCTREFDTQDQLVHHINNDH), 513-540 (FVCRWLDCSREQKPFKAQYMLVVHMRRH), 546-570 (HKCTFEGCTKAYSRLENLKTHLRSH), 576-601 (YVCEHEGCNKAFSNASDRAKHQNRTH), and 607-632 (YVCKIPGCTKRYTDPSSLRKHVKTVH). The interval 620-728 (DPSSLRKHVK…PISNYSNSGL (109 aa)) is disordered. Over residues 632–648 (HGPEAHVTKKQRGDMHP) the composition is skewed to basic and acidic residues. Phosphoserine is present on Ser-664. Residues 684 to 699 (SKREECLQVKTVKAEK) show a composition bias toward basic and acidic residues. The segment covering 703 to 726 (SQPSPGGQSSCSSQQSPISNYSNS) has biased composition (low complexity). Residues 745–845 (DETPIMDSTI…VDFTVLNTLN (101 aa)) are mediates interaction with DZIP1. Residue Lys-773 forms a Glycyl lysine isopeptide (Lys-Gly) (interchain with G-Cter in ubiquitin) linkage. Lys-779 is covalently cross-linked (Glycyl lysine isopeptide (Lys-Gly) (interchain with G-Cter in SUMO2); alternate). Residue Lys-779 forms a Glycyl lysine isopeptide (Lys-Gly) (interchain with G-Cter in ubiquitin); alternate linkage. Glycyl lysine isopeptide (Lys-Gly) (interchain with G-Cter in ubiquitin) cross-links involve residues Lys-784 and Lys-800. The disordered stretch occupies residues 809 to 828 (GNGTQSNNNYSSGGPGTLLP). Polar residues predominate over residues 810–820 (NGTQSNNNYSS). 6 positions are modified to phosphoserine; by PKA: Ser-849, Ser-865, Ser-877, Ser-907, Ser-980, and Ser-1006. Over residues 863-880 (RSSGISPCFSSRRSSEAS) the composition is skewed to low complexity. Positions 863-918 (RSSGISPCFSSRRSSEASQAEGRPQNVSVADSYDPISTDASRRSSEASQGDGLPSL) are disordered. A disordered region spans residues 1164-1189 (EVSSGTSDLSSSKLKCGQQRPSAQQP). Low complexity predominate over residues 1166–1175 (SSGTSDLSSS).

Belongs to the GLI C2H2-type zinc-finger protein family. The phosphorylated form interacts with BTRC. The full-length GLI3 form (GLI3FL) interacts with SUFU and this interaction regulates the formation of either repressor or activator forms of GLI3. Its association with SUFU is regulated by Hh signaling and dissociation of the SUFU-GLI3 interaction requires the presence of the ciliary motor KIF3A. Interacts with KIF7. The activator form of GLI3 (GLI3A) but not the repressor form (GLI3R) can interact with TRPS1. Interacts with ZIC1. Interacts with ZIC3 (via C2H2-type domains 3, 4 and 5); the interaction enhances its transcriptional activity. Interacts with WRD11; the interaction associates EMX1 with GLI3. Interacts with DZIP1; retains GLI3 within the cytoplasm. In terms of processing, phosphorylated by DYRK2 (in vitro). Phosphorylated on multiple sites by protein kinase A (PKA) and phosphorylation by PKA primes further phosphorylation by CK1 and GSK3. Phosphorylation is essential for its proteolytic processing. Post-translationally, transcriptional repressor GLI3R, a C-terminally truncated form, is generated from the full-length GLI3 protein (GLI3FL/GLI3-190) through proteolytic processing. This process requires PKA-primed phosphorylation of GLI3, ubiquitination of GLI3 and the presence of BTRC. GLI3FL is complexed with SUFU in the cytoplasm and is maintained in a neutral state. Without the Hh signal, the SUFU-GLI3 complex is recruited to cilia, leading to the efficient processing of GLI3FL into GLI3R. GLI3R formation leads to its dissociation from SUFU, allowing it to translocate into the nucleus, and repress Hh target genes. When Hh signaling is initiated, SUFU dissociates from GLI3FL and this has two consequences. First, GLI3R production is halted. Second, free GLI3FL translocates to the nucleus, where it is phosphorylated, destabilized, and converted to a transcriptional activator (GLI3A). Phosphorylated in vitro by ULK3.

The protein resides in the nucleus. It is found in the cytoplasm. It localises to the cell projection. Its subcellular location is the cilium. Functionally, has a dual function as a transcriptional activator and a repressor of the sonic hedgehog (Shh) pathway, and plays a role in limb development. The full-length GLI3 form (GLI3FL) after phosphorylation and nuclear translocation, acts as an activator (GLI3A) while GLI3R, its C-terminally truncated form, acts as a repressor. A proper balance between the GLI3 activator and the repressor GLI3R, rather than the repressor gradient itself or the activator/repressor ratio gradient, specifies limb digit number and identity. In concert with TRPS1, plays a role in regulating the size of the zone of distal chondrocytes, in restricting the zone of PTHLH expression in distal cells and in activating chondrocyte proliferation. Binds to the minimal GLI-consensus sequence 5'-GGGTGGTC-3'. The chain is Transcriptional activator GLI3 (Gli3) from Mus musculus (Mouse).